A 320-amino-acid chain; its full sequence is Cytochrome f (320 aa).

A signal peptide spans 1-35 (MKLNSLINLIQKSIYSCTLLLIILNIICVAPNSSN). Residues phenylalanine 37, cysteine 57, cysteine 60, and histidine 61 each coordinate heme. A helical membrane pass occupies residues 286-306 (IKGMIVFFFASVLAQIFFVLK).

Belongs to the cytochrome f family. The 4 large subunits of the cytochrome b6-f complex are cytochrome b6, subunit IV (17 kDa polypeptide, petD), cytochrome f and the Rieske protein, while the 4 small subunits are PetG, PetL, PetM and PetN. The complex functions as a dimer. The cofactor is heme.

Its subcellular location is the plastid. It is found in the chloroplast thylakoid membrane. Functionally, component of the cytochrome b6-f complex, which mediates electron transfer between photosystem II (PSII) and photosystem I (PSI), cyclic electron flow around PSI, and state transitions. This chain is Cytochrome f, found in Pyropia yezoensis (Susabi-nori).